An 899-amino-acid chain; its full sequence is Nuclear factor NF-kappa-B p100 subunit (899 aa).

2 positions are modified to phosphoserine: Ser-23 and Ser-161. Positions 35 to 224 (ADGPYLVIVE…QPIHDSKSPG (190 aa)) constitute an RHD domain. The short motif at 337 to 341 (RKRRK) is the Nuclear localization signal element. A GRR region spans residues 346-377 (FSQPFGGGSHMGGGSGGSAGGYGGAGGGGSLG). A disordered region spans residues 403–434 (GGAQMAGSRRDTDAGEGAEEPRTPPEAPQGEP). Positions 410 to 425 (SRRDTDAGEGAEEPRT) are enriched in basic and acidic residues. Residue Thr-425 is modified to Phosphothreonine. ANK repeat units lie at residues 487 to 516 (NGDTPLHLAIIHGQTGVIEQIAHVIYHAQY), 526 to 555 (LHQTPLHLAVITGQTRVVSFLLQVGADPTL), 559 to 590 (HGDSALHLALRAGAAAPELLQALLRSGAHAVP), 599 to 628 (EGLYPVHLAVHARSPECLDLLVDCGAEVEA), 633 to 663 (GGRTALHLATEMEELGLVTHLVTKLHANVNA), and 667 to 696 (AGNTPLHLAAGLGSPTLTRLLLKAGADIHA). The disordered stretch occupies residues 698–734 (NEEPLCPLPSPSTSGSDSDSEGPERDTQRNFRGHTPL). Residues Ser-713, Ser-715, and Ser-717 each carry the phosphoserine modification. The stretch at 729-755 (RGHTPLDLTCSTKVKTLLLNAAQNTTE) is one ANK 7 repeat. Positions 764 to 851 (AGPGLSLGDA…EGVRLLKGPE (88 aa)) constitute a Death domain. A Phosphoserine modification is found at Ser-812. Residues 851–865 (ETRDKLPSTEVKEDS) are compositionally biased toward basic and acidic residues. The disordered stretch occupies residues 851 to 899 (ETRDKLPSTEVKEDSAYGSQSVEQEAEKLCPPPEPPGGLCHGHPQPQVH). A Glycyl lysine isopeptide (Lys-Gly) (interchain with G-Cter in ubiquitin) cross-link involves residue Lys-855. Phosphoserine; by MAP3K14 occurs at positions 865 and 869. Low complexity predominate over residues 887–899 (GGLCHGHPQPQVH).

Component of the NF-kappa-B RelB-p52 complex. Homodimer; component of the NF-kappa-B p52-p52 complex. Component of the NF-kappa-B p65-p52 complex. Component of the NF-kappa-B p52-c-Rel complex. NFKB2/p52 interacts with NFKBIE. Component of a complex consisting of the NF-kappa-B p50-p50 homodimer and BCL3. Directly interacts with MEN1. Post-translationally, while translation occurs, the particular unfolded structure after the GRR repeat promotes the generation of p52 making it an acceptable substrate for the proteasome. This process is known as cotranslational processing. The processed form is active and the unprocessed form acts as an inhibitor (I kappa B-like), being able to form cytosolic complexes with NF-kappa B, trapping it in the cytoplasm. Complete folding of the region downstream of the GRR repeat precludes processing. In terms of processing, subsequent to MAP3K14-dependent serine phosphorylation, p100 polyubiquitination occurs then triggering its proteasome-dependent processing. Constitutive processing is tightly suppressed by its C-terminal processing inhibitory domain, named PID, which contains the death domain. Post-translationally, ubiquitinated by TRIM55; leading to processing by VCP and subsequent ubiquitin-dependent protein degradation by the proteasome. As to expression, highly expressed in lymph nodes and thymus.

The protein resides in the nucleus. It is found in the cytoplasm. Its function is as follows. NF-kappa-B is a pleiotropic transcription factor present in almost all cell types and is the endpoint of a series of signal transduction events that are initiated by a vast array of stimuli related to many biological processes such as inflammation, immunity, differentiation, cell growth, tumorigenesis and apoptosis. NF-kappa-B is a homo- or heterodimeric complex formed by the Rel-like domain-containing proteins RELA/p65, RELB, NFKB1/p105, NFKB1/p50, REL and NFKB2/p52. The dimers bind at kappa-B sites in the DNA of their target genes and the individual dimers have distinct preferences for different kappa-B sites that they can bind with distinguishable affinity and specificity. Different dimer combinations act as transcriptional activators or repressors, respectively. NF-kappa-B is controlled by various mechanisms of post-translational modification and subcellular compartmentalization as well as by interactions with other cofactors or corepressors. NF-kappa-B complexes are held in the cytoplasm in an inactive state complexed with members of the NF-kappa-B inhibitor (I-kappa-B) family. In a conventional activation pathway, I-kappa-B is phosphorylated by I-kappa-B kinases (IKKs) in response to different activators, subsequently degraded thus liberating the active NF-kappa-B complex which translocates to the nucleus. In a non-canonical activation pathway, the MAP3K14-activated CHUK/IKKA homodimer phosphorylates NFKB2/p100 associated with RelB, inducing its proteolytic processing to NFKB2/p52 and the formation of NF-kappa-B RelB-p52 complexes. The NF-kappa-B heterodimeric RelB-p52 complex is a transcriptional activator. The NF-kappa-B p52-p52 homodimer is a transcriptional repressor. NFKB2 appears to have dual functions such as cytoplasmic retention of attached NF-kappa-B proteins by p100 and generation of p52 by a cotranslational processing. The proteasome-mediated process ensures the production of both p52 and p100 and preserves their independent function. p52 binds to the kappa-B consensus sequence 5'-GGRNNYYCC-3', located in the enhancer region of genes involved in immune response and acute phase reactions. p52 and p100 are respectively the minor and major form; the processing of p100 being relatively poor. Isoform p49 is a subunit of the NF-kappa-B protein complex, which stimulates the HIV enhancer in synergy with p65. In concert with RELB, regulates the circadian clock by repressing the transcriptional activator activity of the CLOCK-BMAL1 heterodimer. This Mus musculus (Mouse) protein is Nuclear factor NF-kappa-B p100 subunit (Nfkb2).